The primary structure comprises 1293 residues: DNA-directed RNA polymerase subunit beta' (1293 aa).

Residues Cys-60, Cys-62, Cys-75, and Cys-78 each contribute to the Zn(2+) site. Asp-535, Asp-537, and Asp-539 together coordinate Mg(2+). Zn(2+) is bound by residues Cys-873, Cys-950, Cys-957, and Cys-960.

The protein belongs to the RNA polymerase beta' chain family. The RNAP catalytic core consists of 2 alpha, 1 beta, 1 beta' and 1 omega subunit. When a sigma factor is associated with the core the holoenzyme is formed, which can initiate transcription. Mg(2+) is required as a cofactor. The cofactor is Zn(2+).

It carries out the reaction RNA(n) + a ribonucleoside 5'-triphosphate = RNA(n+1) + diphosphate. DNA-dependent RNA polymerase catalyzes the transcription of DNA into RNA using the four ribonucleoside triphosphates as substrates. In Cutibacterium acnes (strain DSM 16379 / KPA171202) (Propionibacterium acnes), this protein is DNA-directed RNA polymerase subunit beta'.